We begin with the raw amino-acid sequence, 378 residues long: Erythronate-4-phosphate dehydrogenase (378 aa).

Residues Ser45 and Thr66 each coordinate substrate. NAD(+)-binding residues include Asp146 and Thr175. Arg208 is a catalytic residue. Asp232 lines the NAD(+) pocket. Glu237 is an active-site residue. The Proton donor role is filled by His254. Gly257 contributes to the NAD(+) binding site. Substrate is bound at residue Tyr258.

Belongs to the D-isomer specific 2-hydroxyacid dehydrogenase family. PdxB subfamily. As to quaternary structure, homodimer.

It localises to the cytoplasm. The enzyme catalyses 4-phospho-D-erythronate + NAD(+) = (R)-3-hydroxy-2-oxo-4-phosphooxybutanoate + NADH + H(+). The protein operates within cofactor biosynthesis; pyridoxine 5'-phosphate biosynthesis; pyridoxine 5'-phosphate from D-erythrose 4-phosphate: step 2/5. Functionally, catalyzes the oxidation of erythronate-4-phosphate to 3-hydroxy-2-oxo-4-phosphonooxybutanoate. The sequence is that of Erythronate-4-phosphate dehydrogenase from Escherichia coli O17:K52:H18 (strain UMN026 / ExPEC).